Reading from the N-terminus, the 342-residue chain is UDP-N-acetylglucosamine--N-acetylmuramyl-(pentapeptide) pyrophosphoryl-undecaprenol N-acetylglucosamine transferase (342 aa).

UDP-N-acetyl-alpha-D-glucosamine contacts are provided by residues 10-12 (TGG), Asn124, Ser177, and Gln275.

Belongs to the glycosyltransferase 28 family. MurG subfamily.

It localises to the cell inner membrane. It catalyses the reaction di-trans,octa-cis-undecaprenyl diphospho-N-acetyl-alpha-D-muramoyl-L-alanyl-D-glutamyl-meso-2,6-diaminopimeloyl-D-alanyl-D-alanine + UDP-N-acetyl-alpha-D-glucosamine = di-trans,octa-cis-undecaprenyl diphospho-[N-acetyl-alpha-D-glucosaminyl-(1-&gt;4)]-N-acetyl-alpha-D-muramoyl-L-alanyl-D-glutamyl-meso-2,6-diaminopimeloyl-D-alanyl-D-alanine + UDP + H(+). The protein operates within cell wall biogenesis; peptidoglycan biosynthesis. Functionally, cell wall formation. Catalyzes the transfer of a GlcNAc subunit on undecaprenyl-pyrophosphoryl-MurNAc-pentapeptide (lipid intermediate I) to form undecaprenyl-pyrophosphoryl-MurNAc-(pentapeptide)GlcNAc (lipid intermediate II). In Campylobacter jejuni subsp. doylei (strain ATCC BAA-1458 / RM4099 / 269.97), this protein is UDP-N-acetylglucosamine--N-acetylmuramyl-(pentapeptide) pyrophosphoryl-undecaprenol N-acetylglucosamine transferase.